The chain runs to 118 residues: Small ribosomal subunit protein uS11 (118 aa).

The protein belongs to the universal ribosomal protein uS11 family. Part of the 30S ribosomal subunit. Interacts with proteins S7 and S18. Binds to IF-3.

Located on the platform of the 30S subunit, it bridges several disparate RNA helices of the 16S rRNA. Forms part of the Shine-Dalgarno cleft in the 70S ribosome. The chain is Small ribosomal subunit protein uS11 from Carsonella ruddii (strain PV).